Consider the following 254-residue polypeptide: Zinc transporter GufA (254 aa).

Transmembrane regions (helical) follow at residues 4–24 (GLVA…PVLV), 74–94 (VAAG…LMPH), 112–132 (ALLF…AVGV), 143–163 (LSVA…VALA), 176–196 (FLAL…VLAL), 198–218 (LSSA…LYVI), and 234–254 (EATT…MSLG). 6 residues coordinate Zn(2+): Asn-123, Glu-126, Gln-152, Asn-153, Glu-156, and Glu-185.

The protein belongs to the ZIP transporter (TC 2.A.5) family. Homodimer.

The protein localises to the cell inner membrane. Functionally, mediates the uptake of Zn(2+). The protein is Zinc transporter GufA (gufA) of Myxococcus xanthus.